Consider the following 907-residue polypeptide: Phototropin-2 (907 aa).

The disordered stretch occupies residues 28–84 (ATAGLEIVAEDAPSGSSGAHQQQAWRPVAPATAGRDSGGTGSGKSSVDGGVGRASHD). Over residues 41 to 51 (SGSSGAHQQQA) the composition is skewed to polar residues. The PAS 1 domain maps to 89–162 (VSQELKDALS…AKIRDAVKHG (74 aa)). Residues 138 to 143 (NCRFLQ), arginine 156, asparagine 171, asparagine 181, and glutamine 202 each bind FMN. An S-4a-FMN cysteine modification is found at cysteine 139. In terms of domain architecture, PAC 1 spans 163 to 217 (RSFCGRLLNYRKDGAPFWNLLTVTPIRDDNGKVIKFIGMQVEVSKYTEGLSDKRM). Positions 332–363 (RSSVGSREAPAVVEEPAPAPPPAPEVVERTDS) are disordered. Residues 375-448 (QGIDLATTLE…DKIREAIREQ (74 aa)) enclose the PAS 2 domain. FMN is bound by residues 424–429 (NCRFLQ), arginine 442, asparagine 457, asparagine 467, and glutamine 488. Residue cysteine 425 is modified to S-4a-FMN cysteine. Residues 449–503 (KEITVQLINYTKSGKKFWNLFHLQPMRDQKGELQYFIGVQLDGSDHVEPLRNRLS) form the PAC 2 domain. A Protein kinase domain is found at 576 to 863 (FKPVKPLGCG…ANDIKQHSFF (288 aa)). ATP contacts are provided by residues 582–590 (LGCGDTGSV) and lysine 605. Residue aspartate 701 is the Proton acceptor of the active site.

This sequence belongs to the protein kinase superfamily. Ser/Thr protein kinase family. Homodimer. FMN serves as cofactor. Post-translationally, autophosphorylated in response to blue light irradiation. In terms of processing, 2 molecules of FMN bind covalently to cysteines after exposure to blue light and are reversed in the dark. In terms of tissue distribution, expressed at low levels in leaves of dark-grown seedlings.

The catalysed reaction is L-seryl-[protein] + ATP = O-phospho-L-seryl-[protein] + ADP + H(+). It catalyses the reaction L-threonyl-[protein] + ATP = O-phospho-L-threonyl-[protein] + ADP + H(+). Protein kinase that acts as a blue light photoreceptor in a signal-transduction pathway for phototropic responses. Regulates a wide range of physiological activities in plants that maximize the efficiency of photosynthesis, such as chloroplast relocations, stomata opening, and leaf expansion. This Oryza sativa subsp. japonica (Rice) protein is Phototropin-2 (PHOT2).